The chain runs to 440 residues: Glycerol-3-phosphate dehydrogenase [NAD(+)] 2, mitochondrial (440 aa).

Residues 1-16 (MLAVRRLTRYTFLKRT) constitute a mitochondrion transit peptide. A phosphoserine mark is found at serine 70, serine 72, and serine 75. Residues 90–95 (GSGNWG), phenylalanine 122, and phenylalanine 178 each bind NAD(+). Lysine 201 lines the substrate pocket. Alanine 234 is a binding site for NAD(+). Lysine 294 acts as the Proton acceptor in catalysis. Positions 359 and 388 each coordinate NAD(+). 359-360 (RN) is a substrate binding site.

This sequence belongs to the NAD-dependent glycerol-3-phosphate dehydrogenase family.

Its subcellular location is the cytoplasm. It localises to the mitochondrion. It catalyses the reaction sn-glycerol 3-phosphate + NAD(+) = dihydroxyacetone phosphate + NADH + H(+). Its function is as follows. Catalyzes the production of glycerol under anaerobic growth conditions. Glycerol production serves as a redox sink by consuming the excess cytosolic NADH during anaerobic metabolism. The polypeptide is Glycerol-3-phosphate dehydrogenase [NAD(+)] 2, mitochondrial (Saccharomyces cerevisiae (strain ATCC 204508 / S288c) (Baker's yeast)).